Consider the following 1408-residue polypeptide: DNA-directed RNA polymerase subunit beta' (1408 aa).

Zn(2+) is bound by residues Cys-70, Cys-72, Cys-85, and Cys-88. The Mg(2+) site is built by Asp-460, Asp-462, and Asp-464. Residues Cys-814, Cys-888, Cys-895, and Cys-898 each coordinate Zn(2+).

Belongs to the RNA polymerase beta' chain family. The RNAP catalytic core consists of 2 alpha, 1 beta, 1 beta' and 1 omega subunit. When a sigma factor is associated with the core the holoenzyme is formed, which can initiate transcription. Requires Mg(2+) as cofactor. Zn(2+) serves as cofactor.

The catalysed reaction is RNA(n) + a ribonucleoside 5'-triphosphate = RNA(n+1) + diphosphate. Functionally, DNA-dependent RNA polymerase catalyzes the transcription of DNA into RNA using the four ribonucleoside triphosphates as substrates. The protein is DNA-directed RNA polymerase subunit beta' of Shewanella frigidimarina (strain NCIMB 400).